We begin with the raw amino-acid sequence, 404 residues long: Type II restriction enzyme EcoRII (404 aa).

Tyrosine 308 is a catalytic residue.

Homodimer. Requires Mg(2+) as cofactor.

It catalyses the reaction Endonucleolytic cleavage of DNA to give specific double-stranded fragments with terminal 5'-phosphates.. An E and P subtype restriction enzyme that recognizes the double-stranded sequence 5'-CCWGG-3' and cleaves before C-1. The chain is Type II restriction enzyme EcoRII (ecoRIIR) from Escherichia coli.